The chain runs to 496 residues: Nitric oxide synthase, inducible (496 aa).

3 residues coordinate FMN: Cys6, Glu32, and Gln36. The 241-residue stretch at 101 to 341 (KNLFTMRLRS…VRSVSGFQLP (241 aa)) folds into the FAD-binding FR-type domain. Arg121 serves as a coordination point for NADP(+). FAD contacts are provided by His143, Arg277, Tyr279, Ser280, Thr295, and Ala297. Thr300 provides a ligand contact to NADP(+). The FAD site is built by Tyr301, Val314, Cys315, and Ser316. Residues Thr355, Arg388, Ser417, Arg418, Lys424, Tyr426, Gln428, and Asp461 each coordinate NADP(+).

The protein belongs to the NOS family. Homodimer. Interacts with NHERF1. Interacts with GAPDH; induced by oxidatively-modified low-densitity lipoprotein (LDL(ox)). Interacts with S100A8 and S100A9 to form the iNOS-S100A8/9 transnitrosylase complex. Interacts with SPSB1, SPSB2 and SPSB4. Interacts with ELOC and CUL5 in the presence of SPSB1 or SPSB2 or SPSB4. Forms a complex with ASL, ASS1 and HSP90AA1; the complex regulates cell-autonomous L-arginine synthesis and citrulline recycling while channeling extracellular L-arginine to nitric oxide synthesis pathway. Requires heme b as cofactor. FAD serves as cofactor. FMN is required as a cofactor. It depends on (6R)-L-erythro-5,6,7,8-tetrahydrobiopterin as a cofactor. In terms of processing, polyubiquitinated; mediated by SPSB1, SPSB2 and SPSB4, leading to proteasomal degradation.

It localises to the cytoplasm. It is found in the cytosol. The enzyme catalyses 2 L-arginine + 3 NADPH + 4 O2 + H(+) = 2 L-citrulline + 2 nitric oxide + 3 NADP(+) + 4 H2O. With respect to regulation, not stimulated by calcium/calmodulin. In terms of biological role, produces nitric oxide (NO) which is a messenger molecule with diverse functions throughout the body. In macrophages, NO mediates tumoricidal and bactericidal actions. Also has nitrosylase activity and mediates cysteine S-nitrosylation of cytoplasmic target proteins such PTGS2/COX2. As component of the iNOS-S100A8/9 transnitrosylase complex involved in the selective inflammatory stimulus-dependent S-nitrosylation of GAPDH implicated in regulation of the GAIT complex activity and probably multiple targets including ANXA5, EZR, MSN and VIM. Involved in inflammation, enhances the synthesis of pro-inflammatory mediators such as IL6 and IL8. The chain is Nitric oxide synthase, inducible (NOS2) from Oryctolagus cuniculus (Rabbit).